Consider the following 314-residue polypeptide: tRNA dimethylallyltransferase (314 aa).

11–18 contributes to the ATP binding site; it reads GPTGSGKT. Residue 13 to 18 participates in substrate binding; the sequence is TGSGKT. The interaction with substrate tRNA stretch occupies residues 36–39; the sequence is DSMQ.

The protein belongs to the IPP transferase family. As to quaternary structure, monomer. It depends on Mg(2+) as a cofactor.

The catalysed reaction is adenosine(37) in tRNA + dimethylallyl diphosphate = N(6)-dimethylallyladenosine(37) in tRNA + diphosphate. In terms of biological role, catalyzes the transfer of a dimethylallyl group onto the adenine at position 37 in tRNAs that read codons beginning with uridine, leading to the formation of N6-(dimethylallyl)adenosine (i(6)A). The protein is tRNA dimethylallyltransferase of Chlamydia muridarum (strain MoPn / Nigg).